Here is a 639-residue protein sequence, read N- to C-terminus: Chaperone protein HtpG (639 aa).

The segment at 1 to 347 is a; substrate-binding; sequence MSQQETHGFQ…SNDLPLNVSR (347 aa). A b region spans residues 348-564; sequence EILQDNKVTT…EGEMSTQMIK (217 aa). The tract at residues 565 to 639 is c; the sequence is LMQAAGQDVP…MNQMLLASVK (75 aa).

The protein belongs to the heat shock protein 90 family. In terms of assembly, homodimer.

It is found in the cytoplasm. In terms of biological role, molecular chaperone. Has ATPase activity. The polypeptide is Chaperone protein HtpG (Shewanella halifaxensis (strain HAW-EB4)).